The primary structure comprises 152 residues: Aspartate carbamoyltransferase regulatory chain (152 aa).

Zn(2+)-binding residues include cysteine 109, cysteine 114, cysteine 138, and cysteine 141.

This sequence belongs to the PyrI family. Contains catalytic and regulatory chains. Zn(2+) serves as cofactor.

Functionally, involved in allosteric regulation of aspartate carbamoyltransferase. The chain is Aspartate carbamoyltransferase regulatory chain from Proteus mirabilis (strain HI4320).